The sequence spans 175 residues: Large ribosomal subunit protein uL10 (175 aa).

The protein belongs to the universal ribosomal protein uL10 family. In terms of assembly, part of the ribosomal stalk of the 50S ribosomal subunit. The N-terminus interacts with L11 and the large rRNA to form the base of the stalk. The C-terminus forms an elongated spine to which L12 dimers bind in a sequential fashion forming a multimeric L10(L12)X complex.

Functionally, forms part of the ribosomal stalk, playing a central role in the interaction of the ribosome with GTP-bound translation factors. This Prochlorococcus marinus (strain MIT 9515) protein is Large ribosomal subunit protein uL10.